Reading from the N-terminus, the 400-residue chain is Leukosialin (400 aa).

The N-terminal stretch at 1–19 is a signal peptide; the sequence is MATLLLLLGVLVVSPDALG. The Extracellular portion of the chain corresponds to 20 to 253; sequence STTAVQTPTS…PFRNPDENSR (234 aa). 4 O-linked (GalNAc...) threonine glycosylation sites follow: threonine 21, threonine 22, threonine 26, and threonine 28. 2 stretches are compositionally biased toward polar residues: residues 21–51 and 58–112; these read TTAVQTPTSGEPLVSTSEPLSSKMYTTSITS and TGDQ…TPHA. Positions 21–224 are disordered; sequence TTAVQTPTSG…SSGASGPQVS (204 aa). Residues serine 29 and serine 35 are each glycosylated (O-linked (GalNAc...) serine). A glycan (O-linked (GalNAc...) threonine) is linked at threonine 36. Serine 37, serine 41, and serine 42 each carry an O-linked (GalNAc...) serine glycan. Threonine 46 and threonine 47 each carry an O-linked (GalNAc...) threonine glycan. Serine 48 is a glycosylation site (O-linked (GalNAc...) serine). O-linked (GalNAc...) threonine glycans are attached at residues threonine 50, threonine 58, and threonine 69. O-linked (GalNAc...) serine glycosylation is found at serine 99 and serine 103. 2 O-linked (GalNAc...) threonine glycosylation sites follow: threonine 109 and threonine 113. O-linked (GalNAc...) serine glycosylation is present at serine 114. 2 stretches are compositionally biased toward polar residues: residues 121 to 164 and 172 to 182; these read TANS…SRGT and ATVSLETSKGT. 4 O-linked (GalNAc...) threonine glycosylation sites follow: threonine 136, threonine 137, threonine 173, and threonine 178. Positions 196 to 211 are enriched in low complexity; sequence TSTGTTGPPVTMTTGS. Residues 212–224 are compositionally biased toward polar residues; sequence LEPSSGASGPQVS. An N-linked (GlcNAc...) asparagine glycan is attached at asparagine 239. A helical transmembrane segment spans residues 254–276; the sequence is GMLPVAVLVALLAVIVLVALLLL. The Cytoplasmic segment spans residues 277–400; that stretch reads WRRRQKRRTG…EPEGGDGAAP (124 aa). Residues 278–308 form a required for interaction with EZR, MSN and RDX and for co-localization to microvilli region; sequence RRRQKRRTGALVLSRGGKRNGVVDAWAGPAQ. Positions 282–296 match the Nuclear localization signal motif; it reads KRRTGALVLSRGGKR. Serine 291 is subject to Phosphoserine. Over residues 320-332 the composition is skewed to gly residues; that stretch reads GGSGGDKGSGFPD. The segment at 320-400 is disordered; sequence GGSGGDKGSG…EPEGGDGAAP (81 aa). A Phosphoserine modification is found at serine 336. Position 341 is a phosphothreonine (threonine 341). Serine 351 is modified (phosphoserine). Phosphoserine; by PKC/PRKCQ is present on serine 355. Phosphoserine occurs at positions 368 and 379.

In terms of assembly, interacts with SIGLEC1. As to quaternary structure, monomer. Interacts with CTNNB1. Interacts with RDX (via FERM domain), EZR and MSN. Glycosylated; has a high content of sialic acid and O-linked carbohydrate structures. Post-translationally, phosphorylation at Ser-355 is regulated by chemokines, requires its association with ERM proteins (EZR, RDX and MSN) and is essential for its function in the regulation of T-cell trafficking to lymph nodes. In terms of processing, has a high content of sialic acid and O-linked carbohydrate structures. Cleavage by CTSG releases its extracellular domain and triggers its intramembrane proteolysis by gamma-secretase releasing the CD43 cytoplasmic tail chain (CD43-ct) which translocates to the nucleus. Post-translationally, sumoylated. Cell surface of thymocytes, T-lymphocytes, neutrophils, plasma cells and myelomas.

It localises to the membrane. It is found in the cell projection. Its subcellular location is the microvillus. The protein localises to the uropodium. The protein resides in the nucleus. It localises to the PML body. Predominant cell surface sialoprotein of leukocytes which regulates multiple T-cell functions, including T-cell activation, proliferation, differentiation, trafficking and migration. Positively regulates T-cell trafficking to lymph-nodes via its association with ERM proteins (EZR, RDX and MSN). Negatively regulates Th2 cell differentiation and predisposes the differentiation of T-cells towards a Th1 lineage commitment. Promotes the expression of IFN-gamma by T-cells during T-cell receptor (TCR) activation of naive cells and induces the expression of IFN-gamma by CD4(+) T-cells and to a lesser extent by CD8(+) T-cells. Plays a role in preparing T-cells for cytokine sensing and differentiation into effector cells by inducing the expression of cytokine receptors IFNGR and IL4R, promoting IFNGR and IL4R signaling and by mediating the clustering of IFNGR with TCR. Acts as a major E-selectin ligand responsible for Th17 cell rolling on activated vasculature and recruitment during inflammation. Mediates Th17 cells, but not Th1 cells, adhesion to E-selectin. Acts as a T-cell counter-receptor for SIGLEC1. Functionally, protects cells from apoptotic signals, promoting cell survival. This Homo sapiens (Human) protein is Leukosialin (SPN).